A 128-amino-acid chain; its full sequence is S-adenosylmethionine decarboxylase proenzyme (128 aa).

Ser-63 functions as the Schiff-base intermediate with substrate; via pyruvic acid in the catalytic mechanism. Position 63 is a pyruvic acid (Ser); by autocatalysis (Ser-63). His-68 (proton acceptor; for processing activity) is an active-site residue. The active-site Proton donor; for catalytic activity is Cys-83.

It belongs to the prokaryotic AdoMetDC family. Type 1 subfamily. Heterotetramer of two alpha and two beta chains arranged as a dimer of alpha/beta heterodimers. Pyruvate is required as a cofactor. Is synthesized initially as an inactive proenzyme. Formation of the active enzyme involves a self-maturation process in which the active site pyruvoyl group is generated from an internal serine residue via an autocatalytic post-translational modification. Two non-identical subunits are generated from the proenzyme in this reaction, and the pyruvate is formed at the N-terminus of the alpha chain, which is derived from the carboxyl end of the proenzyme. The post-translation cleavage follows an unusual pathway, termed non-hydrolytic serinolysis, in which the side chain hydroxyl group of the serine supplies its oxygen atom to form the C-terminus of the beta chain, while the remainder of the serine residue undergoes an oxidative deamination to produce ammonia and the pyruvoyl group blocking the N-terminus of the alpha chain.

It catalyses the reaction S-adenosyl-L-methionine + H(+) = S-adenosyl 3-(methylsulfanyl)propylamine + CO2. It participates in amine and polyamine biosynthesis; S-adenosylmethioninamine biosynthesis; S-adenosylmethioninamine from S-adenosyl-L-methionine: step 1/1. Its function is as follows. Catalyzes the decarboxylation of S-adenosylmethionine to S-adenosylmethioninamine (dcAdoMet), the propylamine donor required for the synthesis of the polyamines spermine and spermidine from the diamine putrescine. The sequence is that of S-adenosylmethionine decarboxylase proenzyme from Leptospira borgpetersenii serovar Hardjo-bovis (strain JB197).